Here is a 174-residue protein sequence, read N- to C-terminus: Co-chaperone protein HscB homolog (174 aa).

Positions 2 to 74 constitute a J domain; that stretch reads NYFNLFNFTP…LRRAEHLLSL (73 aa).

Belongs to the HscB family. As to quaternary structure, interacts with HscA and stimulates its ATPase activity.

Functionally, co-chaperone involved in the maturation of iron-sulfur cluster-containing proteins. Seems to help targeting proteins to be folded toward HscA. This Shewanella denitrificans (strain OS217 / ATCC BAA-1090 / DSM 15013) protein is Co-chaperone protein HscB homolog.